The primary structure comprises 162 residues: HTH-type transcriptional regulator IscR (162 aa).

The HTH rrf2-type domain occupies 2–131 (RLTSKGRYAV…NNITLGELVN (130 aa)). The segment at residues 28 to 51 (LADISERQGISLSYLEQLFSRLRK) is a DNA-binding region (H-T-H motif). [2Fe-2S] cluster contacts are provided by C92, C98, and C104. The tract at residues 140 to 162 (GRQHTHDAPRTRTQDAIDVKLRA) is disordered. The span at 143–162 (HTHDAPRTRTQDAIDVKLRA) shows a compositional bias: basic and acidic residues.

[2Fe-2S] cluster serves as cofactor.

Its function is as follows. Regulates the transcription of several operons and genes involved in the biogenesis of Fe-S clusters and Fe-S-containing proteins. This is HTH-type transcriptional regulator IscR from Shigella flexneri.